The primary structure comprises 216 residues: Chitooligosaccharide deacetylase (216 aa).

The region spanning 21–213 is the NodB homology domain; that stretch reads RCVYLTFDDG…ALHSRGFEIR (193 aa). Residue D28 is the Proton acceptor of the active site. The a divalent metal cation site is built by H79 and H83. The Proton donor role is filled by H174.

It belongs to the polysaccharide deacetylase family.

It localises to the cytoplasm. In terms of biological role, is involved in generating a small heat-stable compound (Nod), an acylated oligomer of N-acetylglucosamine, that stimulates mitosis in various plant protoplasts. The polypeptide is Chitooligosaccharide deacetylase (nodB) (Rhizobium leguminosarum bv. viciae).